The primary structure comprises 269 residues: Energy-coupling factor transporter transmembrane protein EcfT (269 aa).

A run of 5 helical transmembrane segments spans residues 28-48 (MIIY…LLLL), 49-69 (AFTL…FNGV), 73-93 (IGII…GSVL), 109-129 (AILI…LTLT), and 246-266 (TLAI…KSPS).

Belongs to the energy-coupling factor EcfT family. Forms a stable energy-coupling factor (ECF) transporter complex composed of 2 membrane-embedded substrate-binding proteins (S component), 2 ATP-binding proteins (A component) and 2 transmembrane proteins (T component). May be able to interact with more than 1 S component at a time.

It localises to the cell membrane. In terms of biological role, transmembrane (T) component of an energy-coupling factor (ECF) ABC-transporter complex. Unlike classic ABC transporters this ECF transporter provides the energy necessary to transport a number of different substrates. In Streptococcus equi subsp. equi (strain 4047), this protein is Energy-coupling factor transporter transmembrane protein EcfT.